The sequence spans 554 residues: Potassium-transporting ATPase potassium-binding subunit (554 aa).

12 helical membrane-spanning segments follow: residues 3-23 (PVLA…LAHV), 60-80 (PAYL…LYLL), 131-151 (GLAV…VALV), 174-194 (VRVL…CGVI), 252-272 (LFEI…FGIM), 279-299 (GYAI…LMMW), 323-343 (FGIG…TGAV), 352-372 (GLGG…PGGV), 375-395 (GLYG…LMVG), 412-432 (FAAC…AAAM), 481-501 (LGLA…ALAG), and 522-542 (LFAG…YFPA).

This sequence belongs to the KdpA family. As to quaternary structure, the system is composed of three essential subunits: KdpA, KdpB and KdpC.

The protein resides in the cell membrane. In terms of biological role, part of the high-affinity ATP-driven potassium transport (or Kdp) system, which catalyzes the hydrolysis of ATP coupled with the electrogenic transport of potassium into the cytoplasm. This subunit binds the extracellular potassium ions and delivers the ions to the membrane domain of KdpB through an intramembrane tunnel. This is Potassium-transporting ATPase potassium-binding subunit from Streptomyces coelicolor (strain ATCC BAA-471 / A3(2) / M145).